The sequence spans 931 residues: Phosphoenolpyruvate carboxylase (931 aa).

Catalysis depends on residues H138 and K594.

It belongs to the PEPCase type 1 family. The cofactor is Mg(2+).

The enzyme catalyses oxaloacetate + phosphate = phosphoenolpyruvate + hydrogencarbonate. Functionally, forms oxaloacetate, a four-carbon dicarboxylic acid source for the tricarboxylic acid cycle. The sequence is that of Phosphoenolpyruvate carboxylase from Streptococcus agalactiae serotype III (strain NEM316).